The sequence spans 295 residues: Ribosomal protein L11 methyltransferase (295 aa).

Residues T146, G167, D189, and N231 each contribute to the S-adenosyl-L-methionine site.

The protein belongs to the methyltransferase superfamily. PrmA family.

The protein localises to the cytoplasm. The catalysed reaction is L-lysyl-[protein] + 3 S-adenosyl-L-methionine = N(6),N(6),N(6)-trimethyl-L-lysyl-[protein] + 3 S-adenosyl-L-homocysteine + 3 H(+). Functionally, methylates ribosomal protein L11. This is Ribosomal protein L11 methyltransferase from Vibrio cholerae serotype O1 (strain M66-2).